Here is a 505-residue protein sequence, read N- to C-terminus: Probable amino-acid permease PB1C11.02 (505 aa).

The next 11 helical transmembrane spans lie at M25–A45, A50–L70, I149–G169, Y175–C195, I221–I241, V266–P286, F305–A325, G357–S377, W383–V403, N425–L445, and L456–W476.

Belongs to the amino acid-polyamine-organocation (APC) superfamily.

It is found in the membrane. The polypeptide is Probable amino-acid permease PB1C11.02 (Schizosaccharomyces pombe (strain 972 / ATCC 24843) (Fission yeast)).